A 1464-amino-acid chain; its full sequence is Glutamate receptor ionotropic, NMDA 2A (1464 aa).

A signal peptide spans 1–22 (MGRVGYWTLLVLPALLVWRGPA). Topologically, residues 23–556 (PSAAAEKGPP…SAFLEPFSAS (534 aa)) are extracellular. Residue His-44 participates in Zn(2+) binding. A glycan (N-linked (GlcNAc...) asparagine) is linked at Asn-75. The cysteines at positions 87 and 320 are disulfide-linked. Zn(2+) contacts are provided by His-128, Glu-266, and Asp-282. Residues Asn-340, Asn-380, Asn-443, and Asn-444 are each glycosylated (N-linked (GlcNAc...) asparagine). 2 cysteine pairs are disulfide-bonded: Cys-429-Cys-455 and Cys-436-Cys-456. Residues Ser-511, Thr-513, and Arg-518 each contribute to the L-glutamate site. Asn-541 is a glycosylation site (N-linked (GlcNAc...) asparagine). Residues 557–576 (VWVMMFVMLLIVSAIAVFVF) form a helical membrane-spanning segment. At 577–600 (EYFSPVGYNRNLAKGKAPHGPSFT) the chain is on the cytoplasmic side. The segment at 599–620 (FTIGKAIWLLWGLVFNNSVPVQ) is pore-forming. Residues 601 to 615 (IGKAIWLLWGLVFNN) constitute an intramembrane region (discontinuously helical). The Cytoplasmic segment spans residues 616-625 (SVPVQNPKGT). Residues 626–646 (TSKIMVSVWAFFAVIFLASYT) traverse the membrane as a helical segment. Residues 647-814 (ANLAAFMIQE…NEVMSSQLDI (168 aa)) are Extracellular-facing. N-linked (GlcNAc...) asparagine glycosylation occurs at Asn-687. Residues Ser-689, Thr-690, and Asp-731 each coordinate L-glutamate. Cys-745 and Cys-800 are oxidised to a cystine. A helical membrane pass occupies residues 815–835 (DNMAGVFYMLAAAMALSLITF). At 836–1464 (IWEHLFYWKL…KKMPSIESDV (629 aa)) the chain is on the cytoplasmic side. Phosphoserine occurs at positions 882, 890, and 929. Composition is skewed to polar residues over residues 997–1010 (EVAVSTESKANSRP) and 1023–1032 (QDSLSQNPVS). The disordered stretch occupies residues 997-1083 (EVAVSTESKA…PDNSKNHKTK (87 aa)). A Phosphoserine modification is found at Ser-1025. 2 stretches are compositionally biased toward basic and acidic residues: residues 1033–1043 (QRDEATAENRT) and 1052–1061 (LPEEMAHSDI). Phosphoserine occurs at positions 1059 and 1062. The segment covering 1070-1083 (CHREPDNSKNHKTK) has biased composition (basic and acidic residues). Residues Ser-1198 and Ser-1291 each carry the phosphoserine modification. A disordered region spans residues 1335-1372 (KLSGKKSSLFPQGLEDSKRSKSLLPDHTSDNPFLHSHR). The short motif at 1462 to 1464 (SDV) is the PDZ-binding element.

The protein belongs to the glutamate-gated ion channel (TC 1.A.10.1) family. NR2A/GRIN2A subfamily. Heterotetramer. Forms heterotetrameric channels composed of two GluN1/zeta subunits (GRIN1), and two identical GluN2/epsilon subunits (GRIN2A, GRIN2B, GRIN2C or GRIN2D) or GluN3 subunits (GRIN3A or GRIN3B) (in vitro). Can also form heterotetrameric channels that contain at least two GluN1 subunits and at least two different GluN2 subunits (or a combination of one GluN2 and one GluN3 subunits) (in vitro). In vivo, the subunit composition may depend on the expression levels of the different subunits. Found in a complex with GRIN1, GRIN3A and PPP2CB. Found in a complex with GRIN1 and GRIN3B. Interacts with AIP1. Interacts with HIP1 and NETO1. Interacts with SNX27 (via PDZ domain); the interaction is required for recycling to the plasma membrane when endocytosed and prevent degradation in lysosomes. Interacts with PDZ domains of PATJ and DLG4. Interacts with LRFN2. Interacts with RPH3A and DLG4; this ternary complex regulates NMDA receptor composition at postsynaptic membranes. Interacts with SORCS2. Interacts with ARC; preventing ARC oligomerization. Interacts (via the extreme C-terminus) with FRMPD2 (the second PDZ domain); the interaction is direct and is likely to promote NMDAR-mediated neural signal transmission. GRIN2A binds FRMPD2 with lower affinity than GRIN2B.

Its subcellular location is the cell projection. The protein resides in the dendritic spine. It is found in the cell membrane. It localises to the synapse. The protein localises to the postsynaptic cell membrane. Its subcellular location is the cytoplasmic vesicle membrane. The catalysed reaction is Ca(2+)(in) = Ca(2+)(out). The enzyme catalyses Na(+)(in) = Na(+)(out). It catalyses the reaction K(+)(in) = K(+)(out). NMDA glutamate receptor activity is inhibited by endogenous Mg(2+) in a voltage-dependent manner. NMDA glutamate receptor activity is inhibited by endogenous Zn(2+). NMDA glutamate receptor activity is inhibited by endogenous protons. In terms of biological role, component of N-methyl-D-aspartate (NMDA) receptors (NMDARs) that function as heterotetrameric, ligand-gated cation channels with high calcium permeability and voltage-dependent block by Mg(2+). NMDARs participate in synaptic plasticity for learning and memory formation by contributing to the slow phase of excitatory postsynaptic current, long-term synaptic potentiation, and learning. Channel activation requires binding of the neurotransmitter L-glutamate to the GluN2 subunit, glycine or D-serine binding to the GluN1 subunit, plus membrane depolarization to eliminate channel inhibition by Mg(2+). NMDARs mediate simultaneously the potasium efflux and the influx of calcium and sodium. Each GluN2 subunit confers differential attributes to channel properties, including activation, deactivation and desensitization kinetics, pH sensitivity, Ca2(+) permeability, and binding to allosteric modulators. Participates in the synaptic plasticity regulation through activation by the L-glutamate releaseed by BEST1, into the synaptic cleft, upon F2R/PAR-1 activation in astrocyte. This Homo sapiens (Human) protein is Glutamate receptor ionotropic, NMDA 2A.